The following is a 287-amino-acid chain: ATP synthase gamma chain (287 aa).

This sequence belongs to the ATPase gamma chain family. In terms of assembly, F-type ATPases have 2 components, CF(1) - the catalytic core - and CF(0) - the membrane proton channel. CF(1) has five subunits: alpha(3), beta(3), gamma(1), delta(1), epsilon(1). CF(0) has three main subunits: a, b and c.

Its subcellular location is the cell membrane. In terms of biological role, produces ATP from ADP in the presence of a proton gradient across the membrane. The gamma chain is believed to be important in regulating ATPase activity and the flow of protons through the CF(0) complex. The protein is ATP synthase gamma chain of Geobacillus stearothermophilus (Bacillus stearothermophilus).